We begin with the raw amino-acid sequence, 864 residues long: DNA mismatch repair protein MutS (864 aa).

623–630 (GPNMGGKS) is a binding site for ATP.

Belongs to the DNA mismatch repair MutS family.

Its function is as follows. This protein is involved in the repair of mismatches in DNA. It is possible that it carries out the mismatch recognition step. This protein has a weak ATPase activity. The polypeptide is DNA mismatch repair protein MutS (Polaromonas sp. (strain JS666 / ATCC BAA-500)).